Here is a 165-residue protein sequence, read N- to C-terminus: Chorismate pyruvate-lyase (165 aa).

Met-35, Arg-77, Leu-115, and Glu-156 together coordinate substrate.

This sequence belongs to the UbiC family. Monomer.

It is found in the cytoplasm. The catalysed reaction is chorismate = 4-hydroxybenzoate + pyruvate. It participates in cofactor biosynthesis; ubiquinone biosynthesis. Its function is as follows. Removes the pyruvyl group from chorismate, with concomitant aromatization of the ring, to provide 4-hydroxybenzoate (4HB) for the ubiquinone pathway. This is Chorismate pyruvate-lyase from Salmonella agona (strain SL483).